The chain runs to 322 residues: MNEKTIILANPRGFCAGVDRAISIVERALEEFGAPIYVRHEVVHNKFVVDNLREKGAVFIEDLAEVPPGATLVYSAHGVSKAVRQEAAERGFRVFDATCPLVTKVHKEVARLDAQDCEIIMIGHKGHVEVEGTMGQLAPGKMLLVETVGDVAKLEVRNPDKLAYVSQTTLSVDETKDIIAALNARFPNIRNPHKEDICYATTNRQTAVKELAEQCDIVIVVGSPNSSNSNRLREVAASRGIDAYMVDNAGYLQRAWFEGKNKVGVTAGASAPEVLVREVLATIRGWGHETVREGEGAEESIVFVLPKELRREGETKPDLCKR.

Residue C15 participates in [4Fe-4S] cluster binding. H44 and H77 together coordinate (2E)-4-hydroxy-3-methylbut-2-enyl diphosphate. Dimethylallyl diphosphate-binding residues include H44 and H77. Isopentenyl diphosphate-binding residues include H44 and H77. A [4Fe-4S] cluster-binding site is contributed by C99. Position 127 (H127) interacts with (2E)-4-hydroxy-3-methylbut-2-enyl diphosphate. H127 is a dimethylallyl diphosphate binding site. Position 127 (H127) interacts with isopentenyl diphosphate. E129 functions as the Proton donor in the catalytic mechanism. A (2E)-4-hydroxy-3-methylbut-2-enyl diphosphate-binding site is contributed by T168. A [4Fe-4S] cluster-binding site is contributed by C198. (2E)-4-hydroxy-3-methylbut-2-enyl diphosphate contacts are provided by S226, S227, N228, and S270. Dimethylallyl diphosphate-binding residues include S226, S227, N228, and S270. The isopentenyl diphosphate site is built by S226, S227, N228, and S270.

This sequence belongs to the IspH family. [4Fe-4S] cluster serves as cofactor.

The catalysed reaction is isopentenyl diphosphate + 2 oxidized [2Fe-2S]-[ferredoxin] + H2O = (2E)-4-hydroxy-3-methylbut-2-enyl diphosphate + 2 reduced [2Fe-2S]-[ferredoxin] + 2 H(+). The enzyme catalyses dimethylallyl diphosphate + 2 oxidized [2Fe-2S]-[ferredoxin] + H2O = (2E)-4-hydroxy-3-methylbut-2-enyl diphosphate + 2 reduced [2Fe-2S]-[ferredoxin] + 2 H(+). The protein operates within isoprenoid biosynthesis; dimethylallyl diphosphate biosynthesis; dimethylallyl diphosphate from (2E)-4-hydroxy-3-methylbutenyl diphosphate: step 1/1. Its pathway is isoprenoid biosynthesis; isopentenyl diphosphate biosynthesis via DXP pathway; isopentenyl diphosphate from 1-deoxy-D-xylulose 5-phosphate: step 6/6. In terms of biological role, catalyzes the conversion of 1-hydroxy-2-methyl-2-(E)-butenyl 4-diphosphate (HMBPP) into a mixture of isopentenyl diphosphate (IPP) and dimethylallyl diphosphate (DMAPP). Acts in the terminal step of the DOXP/MEP pathway for isoprenoid precursor biosynthesis. This is 4-hydroxy-3-methylbut-2-enyl diphosphate reductase from Neisseria meningitidis serogroup A / serotype 4A (strain DSM 15465 / Z2491).